The chain runs to 614 residues: Pentatricopeptide repeat-containing protein At1g63080, mitochondrial (614 aa).

A mitochondrion-targeting transit peptide spans 1 to 7; it reads MSLAKRF. PPR repeat units follow at residues 64-98, 99-133, 134-168, 169-203, 204-238, 239-273, 274-308, 309-343, 344-378, 379-413, 414-448, 449-483, 484-518, 519-553, and 554-588; these read SIVE…GVSH, NLYT…GYGP, SIVT…GYQP, DTVT…GCQP, DLVT…KIEA, DVVI…GIRP, DVFT…KINP, NVVT…SIDP, NIVT…DCLP, DVVT…GLVG, NTVT…GVHP, NIMT…KMEP, DIYT…GVKP, DVIA…GPLP, and DSGT…RFAG.

It belongs to the PPR family. P subfamily.

It is found in the mitochondrion. This Arabidopsis thaliana (Mouse-ear cress) protein is Pentatricopeptide repeat-containing protein At1g63080, mitochondrial.